The primary structure comprises 495 residues: UDP-N-acetylmuramoyl-L-alanyl-D-glutamate--2,6-diaminopimelate ligase (495 aa).

UDP-N-acetyl-alpha-D-muramoyl-L-alanyl-D-glutamate-binding positions include leucine 28, serine 30, and 45–47; that span reads HRV. Residue 117–123 coordinates ATP; sequence GTNGKTT. UDP-N-acetyl-alpha-D-muramoyl-L-alanyl-D-glutamate is bound by residues asparagine 158, 159–160, serine 186, glutamine 192, and arginine 194; that span reads TT. Position 226 is an N6-carboxylysine (lysine 226). Residues arginine 394, 418–421, glycine 469, and glutamate 473 each bind meso-2,6-diaminopimelate; that span reads DNPR. Positions 418 to 421 match the Meso-diaminopimelate recognition motif motif; that stretch reads DNPR.

This sequence belongs to the MurCDEF family. MurE subfamily. Requires Mg(2+) as cofactor. Post-translationally, carboxylation is probably crucial for Mg(2+) binding and, consequently, for the gamma-phosphate positioning of ATP.

The protein localises to the cytoplasm. The enzyme catalyses UDP-N-acetyl-alpha-D-muramoyl-L-alanyl-D-glutamate + meso-2,6-diaminopimelate + ATP = UDP-N-acetyl-alpha-D-muramoyl-L-alanyl-gamma-D-glutamyl-meso-2,6-diaminopimelate + ADP + phosphate + H(+). It functions in the pathway cell wall biogenesis; peptidoglycan biosynthesis. Catalyzes the addition of meso-diaminopimelic acid to the nucleotide precursor UDP-N-acetylmuramoyl-L-alanyl-D-glutamate (UMAG) in the biosynthesis of bacterial cell-wall peptidoglycan. This is UDP-N-acetylmuramoyl-L-alanyl-D-glutamate--2,6-diaminopimelate ligase from Histophilus somni (strain 129Pt) (Haemophilus somnus).